We begin with the raw amino-acid sequence, 300 residues long: 4-hydroxy-tetrahydrodipicolinate synthase (300 aa).

Residue threonine 55 participates in pyruvate binding. Residue tyrosine 143 is the Proton donor/acceptor of the active site. The Schiff-base intermediate with substrate role is filled by lysine 171. Isoleucine 211 is a binding site for pyruvate.

This sequence belongs to the DapA family. Homotetramer; dimer of dimers.

It localises to the cytoplasm. The enzyme catalyses L-aspartate 4-semialdehyde + pyruvate = (2S,4S)-4-hydroxy-2,3,4,5-tetrahydrodipicolinate + H2O + H(+). It participates in amino-acid biosynthesis; L-lysine biosynthesis via DAP pathway; (S)-tetrahydrodipicolinate from L-aspartate: step 3/4. Its function is as follows. Catalyzes the condensation of (S)-aspartate-beta-semialdehyde [(S)-ASA] and pyruvate to 4-hydroxy-tetrahydrodipicolinate (HTPA). The chain is 4-hydroxy-tetrahydrodipicolinate synthase from Mycolicibacterium paratuberculosis (strain ATCC BAA-968 / K-10) (Mycobacterium paratuberculosis).